The following is a 324-amino-acid chain: Glyoxylate/hydroxypyruvate reductase B (324 aa).

Active-site residues include arginine 237 and glutamate 266. Histidine 285 serves as the catalytic Proton donor.

It belongs to the D-isomer specific 2-hydroxyacid dehydrogenase family. GhrB subfamily. As to quaternary structure, homodimer.

The protein localises to the cytoplasm. The catalysed reaction is glycolate + NADP(+) = glyoxylate + NADPH + H(+). It catalyses the reaction (R)-glycerate + NAD(+) = 3-hydroxypyruvate + NADH + H(+). The enzyme catalyses (R)-glycerate + NADP(+) = 3-hydroxypyruvate + NADPH + H(+). Its function is as follows. Catalyzes the NADPH-dependent reduction of glyoxylate and hydroxypyruvate into glycolate and glycerate, respectively. This Escherichia fergusonii (strain ATCC 35469 / DSM 13698 / CCUG 18766 / IAM 14443 / JCM 21226 / LMG 7866 / NBRC 102419 / NCTC 12128 / CDC 0568-73) protein is Glyoxylate/hydroxypyruvate reductase B.